Here is a 301-residue protein sequence, read N- to C-terminus: MGRTRKGRAISGWLVVDKPAGMTSTAVVNKVRWALEAQKAGHAGTLDPDATGVLAVALGEATKTVPYITDALKCYRFMVRLGLSTRTDDASGEVIATSEARPTDAEIEAALAAFRGEIQQVPPQFSAVKVEGERAYDLARDGERLDLAARPLWVESLEILSRPDADHVELEMVCGKGGYVRSIARDLGEALGCHGHVAWLRRTWSGPFEAEDGISVATIDELARSEALLSHVLPLAKGLADLPELPATPEGAARLRCGNPGMVIASDVEFGEEAWASFQGQPVAVGIYKSGELHPSRVFNL.

Residue aspartate 47 is the Nucleophile of the active site.

This sequence belongs to the pseudouridine synthase TruB family. Type 1 subfamily.

It carries out the reaction uridine(55) in tRNA = pseudouridine(55) in tRNA. Its function is as follows. Responsible for synthesis of pseudouridine from uracil-55 in the psi GC loop of transfer RNAs. In Cereibacter sphaeroides (strain ATCC 17023 / DSM 158 / JCM 6121 / CCUG 31486 / LMG 2827 / NBRC 12203 / NCIMB 8253 / ATH 2.4.1.) (Rhodobacter sphaeroides), this protein is tRNA pseudouridine synthase B.